A 313-amino-acid chain; its full sequence is GTP cyclohydrolase MptA (313 aa).

This sequence belongs to the GTP cyclohydrolase IV family. In terms of assembly, homodimer. It depends on Fe(2+) as a cofactor.

It catalyses the reaction GTP + H2O = 7,8-dihydroneopterin 2',3'-cyclic phosphate + formate + diphosphate + H(+). It functions in the pathway cofactor biosynthesis; 5,6,7,8-tetrahydromethanopterin biosynthesis. Converts GTP to 7,8-dihydro-D-neopterin 2',3'-cyclic phosphate, the first intermediate in the biosynthesis of coenzyme methanopterin. This Methanosphaera stadtmanae (strain ATCC 43021 / DSM 3091 / JCM 11832 / MCB-3) protein is GTP cyclohydrolase MptA.